Reading from the N-terminus, the 104-residue chain is Large ribosomal subunit protein uL24 (104 aa).

It belongs to the universal ribosomal protein uL24 family. As to quaternary structure, part of the 50S ribosomal subunit.

Functionally, one of two assembly initiator proteins, it binds directly to the 5'-end of the 23S rRNA, where it nucleates assembly of the 50S subunit. One of the proteins that surrounds the polypeptide exit tunnel on the outside of the subunit. The polypeptide is Large ribosomal subunit protein uL24 (Bartonella quintana (strain Toulouse) (Rochalimaea quintana)).